Here is a 350-residue protein sequence, read N- to C-terminus: Phosphotriesterase-related protein (350 aa).

Residues H22, H24, E169, H201, H230, and D298 each coordinate a divalent metal cation.

Belongs to the metallo-dependent hydrolases superfamily. Phosphotriesterase family. A divalent metal cation serves as cofactor.

This Drosophila willistoni (Fruit fly) protein is Phosphotriesterase-related protein.